Consider the following 375-residue polypeptide: Queuine tRNA-ribosyltransferase (375 aa).

The active-site Proton acceptor is the Asp89. Substrate contacts are provided by residues 89 to 93, Asp143, Gln187, and Gly214; that span reads DSGGF. The tract at residues 245-251 is RNA binding; that stretch reads GVGKPED. The active-site Nucleophile is the Asp264. Residues 269-273 are RNA binding; important for wobble base 34 recognition; the sequence is TRNAR. Zn(2+) is bound by residues Cys302, Cys304, Cys307, and His333.

Belongs to the queuine tRNA-ribosyltransferase family. In terms of assembly, homodimer. Within each dimer, one monomer is responsible for RNA recognition and catalysis, while the other monomer binds to the replacement base PreQ1. Zn(2+) serves as cofactor.

The enzyme catalyses 7-aminomethyl-7-carbaguanine + guanosine(34) in tRNA = 7-aminomethyl-7-carbaguanosine(34) in tRNA + guanine. It participates in tRNA modification; tRNA-queuosine biosynthesis. Catalyzes the base-exchange of a guanine (G) residue with the queuine precursor 7-aminomethyl-7-deazaguanine (PreQ1) at position 34 (anticodon wobble position) in tRNAs with GU(N) anticodons (tRNA-Asp, -Asn, -His and -Tyr). Catalysis occurs through a double-displacement mechanism. The nucleophile active site attacks the C1' of nucleotide 34 to detach the guanine base from the RNA, forming a covalent enzyme-RNA intermediate. The proton acceptor active site deprotonates the incoming PreQ1, allowing a nucleophilic attack on the C1' of the ribose to form the product. After dissociation, two additional enzymatic reactions on the tRNA convert PreQ1 to queuine (Q), resulting in the hypermodified nucleoside queuosine (7-(((4,5-cis-dihydroxy-2-cyclopenten-1-yl)amino)methyl)-7-deazaguanosine). In Salmonella paratyphi A (strain ATCC 9150 / SARB42), this protein is Queuine tRNA-ribosyltransferase.